A 156-amino-acid polypeptide reads, in one-letter code: Endogenous retrovirus group K member 21 Pro protein (156 aa).

The Peptidase A2 domain maps to 21 to 96 (FEGLVDTGAD…IPLNLWGRDL (76 aa)). Residue D26 is part of the active site. A G-patch domain is found at 111-156 (YSPTSQKIMTKMGYIPGKGLGKNEDGIKVPVEAKINQKREGIGYPF).

Belongs to the peptidase A2 family. HERV class-II K(HML-2) subfamily. Active as a homodimer. Post-translationally, autoproteolytically processed at the N-terminus. Expected C-terminal autoprocessing not detected. The sequence shown is that of the processed Pro protein.

It catalyses the reaction Processing at the authentic HIV-1 PR recognition site and release of the mature p17 matrix and the p24 capsid protein, as a result of the cleavage of the -SQNY-|-PIVQ- cleavage site.. Functionally, retroviral proteases have roles in the processing of the primary translation products and the maturation of the viral particle. Endogenous Pro proteins may have kept, lost or modified their original function during evolution. The protein is Endogenous retrovirus group K member 21 Pro protein (ERVK-21) of Homo sapiens (Human).